Consider the following 34-residue polypeptide: MEVNILAFIATALFILIPTSFLLIIYVKTVSQNN.

The helical transmembrane segment at 5–25 threads the bilayer; that stretch reads ILAFIATALFILIPTSFLLII.

The protein belongs to the PsbM family. PSII is composed of 1 copy each of membrane proteins PsbA, PsbB, PsbC, PsbD, PsbE, PsbF, PsbH, PsbI, PsbJ, PsbK, PsbL, PsbM, PsbT, PsbX, PsbY, PsbZ, Psb30/Ycf12, at least 3 peripheral proteins of the oxygen-evolving complex and a large number of cofactors. It forms dimeric complexes. Detected in both etioplasts and green leaves; PSII is only assembled in green leaves.

It localises to the plastid. It is found in the chloroplast thylakoid membrane. Functionally, one of the components of the core complex of photosystem II (PSII). PSII is a light-driven water:plastoquinone oxidoreductase that uses light energy to abstract electrons from H(2)O, generating O(2) and a proton gradient subsequently used for ATP formation. It consists of a core antenna complex that captures photons, and an electron transfer chain that converts photonic excitation into a charge separation. This subunit is found at the monomer-monomer interface. The chain is Photosystem II reaction center protein M from Hordeum vulgare (Barley).